Reading from the N-terminus, the 534-residue chain is Serine/threonine-protein phosphatase 2B catalytic subunit (534 aa).

Positions 88, 90, and 116 each coordinate Fe cation. Residues D116 and N148 each coordinate Zn(2+). H149 (proton donor) is an active-site residue. Zn(2+) contacts are provided by H197 and H279. 2 disordered regions span residues 375 to 398 and 475 to 534; these read LEDE…DVES and PSHE…TREA. 2 stretches are compositionally biased toward basic and acidic residues: residues 475–497 and 524–534; these read PSHE…RAQQ and QRDAARETREA.

The protein belongs to the PPP phosphatase family. PP-2B subfamily. As to quaternary structure, composed of two components (A and B), the A component is the catalytic subunit and the B component confers calcium sensitivity. Requires Fe(3+) as cofactor. Zn(2+) is required as a cofactor.

It catalyses the reaction O-phospho-L-seryl-[protein] + H2O = L-seryl-[protein] + phosphate. It carries out the reaction O-phospho-L-threonyl-[protein] + H2O = L-threonyl-[protein] + phosphate. Its function is as follows. Calcium-dependent, calmodulin-stimulated protein phosphatase. This subunit may have a role in the calmodulin activation of calcineurin. The chain is Serine/threonine-protein phosphatase 2B catalytic subunit (cnaA) from Aspergillus fumigatus (strain ATCC MYA-4609 / CBS 101355 / FGSC A1100 / Af293) (Neosartorya fumigata).